A 354-amino-acid chain; its full sequence is Sulfate/thiosulfate import ATP-binding protein CysA 2 (354 aa).

In terms of domain architecture, ABC transporter spans 3–237; that stretch reads IHIQQVNKHF…PSNPFVYEFL (235 aa). 35 to 42 provides a ligand contact to ATP; that stretch reads GPSGSGKT.

It belongs to the ABC transporter superfamily. Sulfate/tungstate importer (TC 3.A.1.6) family. As to quaternary structure, the complex is composed of two ATP-binding proteins (CysA), two transmembrane proteins (CysT and CysW) and a solute-binding protein (CysP).

Its subcellular location is the cell inner membrane. The catalysed reaction is sulfate(out) + ATP + H2O = sulfate(in) + ADP + phosphate + H(+). The enzyme catalyses thiosulfate(out) + ATP + H2O = thiosulfate(in) + ADP + phosphate + H(+). Part of the ABC transporter complex CysAWTP involved in sulfate/thiosulfate import. Responsible for energy coupling to the transport system. In Shewanella oneidensis (strain ATCC 700550 / JCM 31522 / CIP 106686 / LMG 19005 / NCIMB 14063 / MR-1), this protein is Sulfate/thiosulfate import ATP-binding protein CysA 2.